A 295-amino-acid chain; its full sequence is UDP-N-acetylenolpyruvoylglucosamine reductase (295 aa).

In terms of domain architecture, FAD-binding PCMH-type spans 23–188 (KVGGPADFLA…ISAKFALKPG (166 aa)). Residue Arg-167 is part of the active site. Ser-217 acts as the Proton donor in catalysis. Glu-287 is an active-site residue.

Belongs to the MurB family. FAD is required as a cofactor.

It localises to the cytoplasm. The enzyme catalyses UDP-N-acetyl-alpha-D-muramate + NADP(+) = UDP-N-acetyl-3-O-(1-carboxyvinyl)-alpha-D-glucosamine + NADPH + H(+). It functions in the pathway cell wall biogenesis; peptidoglycan biosynthesis. Functionally, cell wall formation. The chain is UDP-N-acetylenolpyruvoylglucosamine reductase from Streptococcus pyogenes serotype M12 (strain MGAS9429).